We begin with the raw amino-acid sequence, 168 residues long: NADH-quinone oxidoreductase subunit B (168 aa).

Positions 49, 50, 114, and 144 each coordinate [4Fe-4S] cluster.

This sequence belongs to the complex I 20 kDa subunit family. In terms of assembly, NDH-1 is composed of 14 different subunits. Subunits NuoB, C, D, E, F, and G constitute the peripheral sector of the complex. The cofactor is [4Fe-4S] cluster.

It localises to the cell membrane. The enzyme catalyses a quinone + NADH + 5 H(+)(in) = a quinol + NAD(+) + 4 H(+)(out). Its function is as follows. NDH-1 shuttles electrons from NADH, via FMN and iron-sulfur (Fe-S) centers, to quinones in the respiratory chain. Couples the redox reaction to proton translocation (for every two electrons transferred, four hydrogen ions are translocated across the cytoplasmic membrane), and thus conserves the redox energy in a proton gradient. The sequence is that of NADH-quinone oxidoreductase subunit B from Wolbachia pipientis wMel.